Reading from the N-terminus, the 91-residue chain is Envelope glycoprotein N (91 aa).

A signal peptide spans 1-23 (MGPPRRVCRAGLLFVLLVALAAG). A disordered region spans residues 23–48 (GDAGPRGEPPGEEGGRDGIGGARCET). Over 24–55 (DAGPRGEPPGEEGGRDGIGGARCETQNTGQMS) the chain is Virion surface. Residues 56–76 (APGALVPFYVGMASMGVCIIA) form a helical membrane-spanning segment. The Intravirion segment spans residues 77-91 (HVCQICQRLLAAGHA).

Belongs to the herpesviridae glycoprotein N family. Interacts (via N-terminus) with gM (via N-terminus). The gM-gN heterodimer forms the gCII complex.

It localises to the virion membrane. The protein localises to the host membrane. It is found in the host Golgi apparatus. Its subcellular location is the host trans-Golgi network. Functionally, envelope glycoprotein necessary for proper maturation of gM and modulation of its membrane fusion activity. Also plays a critical role in virion morphogenesis. The polypeptide is Envelope glycoprotein N (Homo sapiens (Human)).